The following is a 103-amino-acid chain: DNA-directed RNA polymerase subunit omega (103 aa).

This sequence belongs to the RNA polymerase subunit omega family. The RNAP catalytic core consists of 2 alpha, 1 beta, 1 beta' and 1 omega subunit. When a sigma factor is associated with the core the holoenzyme is formed, which can initiate transcription.

The catalysed reaction is RNA(n) + a ribonucleoside 5'-triphosphate = RNA(n+1) + diphosphate. Its function is as follows. Promotes RNA polymerase assembly. Latches the N- and C-terminal regions of the beta' subunit thereby facilitating its interaction with the beta and alpha subunits. The chain is DNA-directed RNA polymerase subunit omega from Streptococcus agalactiae serotype III (strain NEM316).